An 885-amino-acid chain; its full sequence is Initiator protein NS1 (885 aa).

The disordered stretch occupies residues 404 to 477 (AEAGPSGTQP…GREDIFSGAP (74 aa)). Residues 409 to 423 (SGTQPVETAQQSPPT) show a composition bias toward polar residues. A compositionally biased stretch (gly residues) spans 452-465 (QAAGGSEMGAGGSA).

This sequence belongs to the parvoviruses initiator protein NS1 family. As to quaternary structure, homooligomer. It depends on Mg(2+) as a cofactor.

Its subcellular location is the host nucleus. It catalyses the reaction ATP + H2O = ADP + phosphate + H(+). Functionally, multifunctional protein which displays endonuclease and helicase activities required for initiating and directing viral DNA replication. Also plays a role in viral packaging and transactivation of several promoters. Binds site-specifically to 2-3 approximate tandem copies within the origins of replication (Ori), unwinds this hairpin region and nicks one DNA strand thereby initiating the rolling circle replication (RCR). This is Initiator protein NS1 from Bombyx mori densovirus (BmDNV).